Consider the following 432-residue polypeptide: Adenylosuccinate synthetase (432 aa).

Residues 16-22 (GDEGKGK) and 44-46 (GHM) contribute to the GTP site. Catalysis depends on D17, which acts as the Proton acceptor. Mg(2+)-binding residues include D17 and G44. IMP contacts are provided by residues 17–20 (DEGK), 42–45 (NAGH), T132, R146, Q226, T241, and R305. The active-site Proton donor is the H45. Substrate is bound at residue 301–307 (LNTGRPR). GTP-binding positions include R307, 333 to 335 (LFD), and 415 to 417 (SVG).

This sequence belongs to the adenylosuccinate synthetase family. Homodimer. Mg(2+) serves as cofactor.

The protein localises to the cytoplasm. It carries out the reaction IMP + L-aspartate + GTP = N(6)-(1,2-dicarboxyethyl)-AMP + GDP + phosphate + 2 H(+). Its pathway is purine metabolism; AMP biosynthesis via de novo pathway; AMP from IMP: step 1/2. Plays an important role in the de novo pathway of purine nucleotide biosynthesis. Catalyzes the first committed step in the biosynthesis of AMP from IMP. This Mycoplasma mycoides subsp. mycoides SC (strain CCUG 32753 / NCTC 10114 / PG1) protein is Adenylosuccinate synthetase.